A 357-amino-acid polypeptide reads, in one-letter code: UDP-N-acetylglucosamine--N-acetylmuramyl-(pentapeptide) pyrophosphoryl-undecaprenol N-acetylglucosamine transferase (357 aa).

UDP-N-acetyl-alpha-D-glucosamine contacts are provided by residues 14–16, N120, R164, S194, and Q291; that span reads TGG.

The protein belongs to the glycosyltransferase 28 family. MurG subfamily.

Its subcellular location is the cell inner membrane. The catalysed reaction is di-trans,octa-cis-undecaprenyl diphospho-N-acetyl-alpha-D-muramoyl-L-alanyl-D-glutamyl-meso-2,6-diaminopimeloyl-D-alanyl-D-alanine + UDP-N-acetyl-alpha-D-glucosamine = di-trans,octa-cis-undecaprenyl diphospho-[N-acetyl-alpha-D-glucosaminyl-(1-&gt;4)]-N-acetyl-alpha-D-muramoyl-L-alanyl-D-glutamyl-meso-2,6-diaminopimeloyl-D-alanyl-D-alanine + UDP + H(+). It functions in the pathway cell wall biogenesis; peptidoglycan biosynthesis. In terms of biological role, cell wall formation. Catalyzes the transfer of a GlcNAc subunit on undecaprenyl-pyrophosphoryl-MurNAc-pentapeptide (lipid intermediate I) to form undecaprenyl-pyrophosphoryl-MurNAc-(pentapeptide)GlcNAc (lipid intermediate II). The polypeptide is UDP-N-acetylglucosamine--N-acetylmuramyl-(pentapeptide) pyrophosphoryl-undecaprenol N-acetylglucosamine transferase (Fusobacterium nucleatum subsp. nucleatum (strain ATCC 25586 / DSM 15643 / BCRC 10681 / CIP 101130 / JCM 8532 / KCTC 2640 / LMG 13131 / VPI 4355)).